Here is a 198-residue protein sequence, read N- to C-terminus: Holliday junction resolvase RecU (198 aa).

The segment at 1 to 22 (MVNYPHKLSSQKRQTSLSQPKN) is disordered. The span at 11–22 (QKRQTSLSQPKN) shows a compositional bias: polar residues. Mg(2+)-binding residues include Thr81, Asp83, Glu96, and Gln115.

Belongs to the RecU family. Mg(2+) serves as cofactor.

The protein resides in the cytoplasm. The catalysed reaction is Endonucleolytic cleavage at a junction such as a reciprocal single-stranded crossover between two homologous DNA duplexes (Holliday junction).. Functionally, endonuclease that resolves Holliday junction intermediates in genetic recombination. Cleaves mobile four-strand junctions by introducing symmetrical nicks in paired strands. Promotes annealing of linear ssDNA with homologous dsDNA. Required for DNA repair, homologous recombination and chromosome segregation. This is Holliday junction resolvase RecU from Streptococcus pneumoniae (strain Hungary19A-6).